The primary structure comprises 125 residues: Phosphoribosyl-AMP cyclohydrolase (125 aa).

D80 is a binding site for Mg(2+). C81 provides a ligand contact to Zn(2+). D82 and D84 together coordinate Mg(2+). Zn(2+) contacts are provided by C97 and C104.

Belongs to the PRA-CH family. In terms of assembly, homodimer. Requires Mg(2+) as cofactor. It depends on Zn(2+) as a cofactor.

Its subcellular location is the cytoplasm. It carries out the reaction 1-(5-phospho-beta-D-ribosyl)-5'-AMP + H2O = 1-(5-phospho-beta-D-ribosyl)-5-[(5-phospho-beta-D-ribosylamino)methylideneamino]imidazole-4-carboxamide. It participates in amino-acid biosynthesis; L-histidine biosynthesis; L-histidine from 5-phospho-alpha-D-ribose 1-diphosphate: step 3/9. Functionally, catalyzes the hydrolysis of the adenine ring of phosphoribosyl-AMP. In Leifsonia xyli subsp. xyli (strain CTCB07), this protein is Phosphoribosyl-AMP cyclohydrolase.